We begin with the raw amino-acid sequence, 300 residues long: Protoheme IX farnesyltransferase (300 aa).

A run of 9 helical transmembrane segments spans residues 28-48 (VVAL…PTIL), 50-70 (VQPL…AAAL), 100-120 (ALIF…VFTN), 122-142 (LTAW…TAYL), 149-169 (NIVI…TAVT), 176-196 (ALLL…ALAI), 222-242 (CILL…LVGM), 243-263 (SGPL…YKAW), and 280-300 (FSIY…YLWA).

The protein belongs to the UbiA prenyltransferase family. Protoheme IX farnesyltransferase subfamily.

The protein resides in the cell inner membrane. It catalyses the reaction heme b + (2E,6E)-farnesyl diphosphate + H2O = Fe(II)-heme o + diphosphate. Its pathway is porphyrin-containing compound metabolism; heme O biosynthesis; heme O from protoheme: step 1/1. In terms of biological role, converts heme B (protoheme IX) to heme O by substitution of the vinyl group on carbon 2 of heme B porphyrin ring with a hydroxyethyl farnesyl side group. In Shewanella oneidensis (strain ATCC 700550 / JCM 31522 / CIP 106686 / LMG 19005 / NCIMB 14063 / MR-1), this protein is Protoheme IX farnesyltransferase.